The sequence spans 1208 residues: DNA-directed RNA polymerase subunit beta (1208 aa).

It belongs to the RNA polymerase beta chain family. In terms of assembly, the RNAP catalytic core consists of 2 alpha, 1 beta, 1 beta' and 1 omega subunit. When a sigma factor is associated with the core the holoenzyme is formed, which can initiate transcription.

The enzyme catalyses RNA(n) + a ribonucleoside 5'-triphosphate = RNA(n+1) + diphosphate. Functionally, DNA-dependent RNA polymerase catalyzes the transcription of DNA into RNA using the four ribonucleoside triphosphates as substrates. The polypeptide is DNA-directed RNA polymerase subunit beta (Enterococcus faecium (Streptococcus faecium)).